We begin with the raw amino-acid sequence, 539 residues long: Probable K(+)/H(+) antiporter subunit D (539 aa).

Transmembrane regions (helical) follow at residues Trp-4 to Leu-23, Ala-36 to Ala-58, Phe-78 to Leu-100, Ala-113 to Gly-135, Leu-140 to Leu-162, Leu-175 to Met-197, Met-217 to Leu-239, Ala-251 to Phe-273, Phe-283 to Ala-305, Leu-312 to Gly-331, Met-335 to Ile-357, Val-400 to Ile-422, Ala-442 to Ala-464, and Val-484 to Ala-506.

It belongs to the CPA3 antiporters (TC 2.A.63) subunit D family. In terms of assembly, may form a hetero-oligomeric complex that consists of six subunits: PhaAB, PhaC, PhaD, PhaE, PhaF and PhaG.

Its subcellular location is the cell membrane. Functionally, part of a K(+) efflux system which is required for the adaptation of R.meliloti to alkaline pH as well as for the infection process during symbiotic nodule development. This Rhizobium meliloti (strain 1021) (Ensifer meliloti) protein is Probable K(+)/H(+) antiporter subunit D (phaD).